The chain runs to 229 residues: Dihydrofolate reductase (229 aa).

The DHFR domain maps to 11 to 227 (SITAVVAATA…VKYIFEMWVL (217 aa)). Residues alanine 17 and 23 to 29 (GIGLNGG) contribute to the NADP(+) site. Residue 37–42 (EMKYFA) participates in substrate binding. 64-66 (RKT) provides a ligand contact to NADP(+). Arginine 80 is a substrate binding site. Residues 86-88 (SGK) and 127-134 (GGATLYTS) each bind NADP(+).

Belongs to the dihydrofolate reductase family. As to quaternary structure, monomer.

It carries out the reaction (6S)-5,6,7,8-tetrahydrofolate + NADP(+) = 7,8-dihydrofolate + NADPH + H(+). Its pathway is cofactor biosynthesis; tetrahydrofolate biosynthesis; 5,6,7,8-tetrahydrofolate from 7,8-dihydrofolate: step 1/1. Key enzyme in folate metabolism. Catalyzes an essential reaction for de novo glycine and purine synthesis, and for DNA precursor synthesis. This Cryptococcus neoformans var. neoformans serotype D (strain JEC21 / ATCC MYA-565) (Filobasidiella neoformans) protein is Dihydrofolate reductase (DFR1).